The primary structure comprises 243 residues: Purine nucleoside phosphorylase YfiH (243 aa).

Histidine 71, cysteine 107, and histidine 124 together coordinate Zn(2+).

It belongs to the purine nucleoside phosphorylase YfiH/LACC1 family. As to quaternary structure, homodimer. It depends on Cu(2+) as a cofactor. Zn(2+) is required as a cofactor.

The enzyme catalyses adenosine + phosphate = alpha-D-ribose 1-phosphate + adenine. It catalyses the reaction S-methyl-5'-thioadenosine + phosphate = 5-(methylsulfanyl)-alpha-D-ribose 1-phosphate + adenine. The catalysed reaction is inosine + phosphate = alpha-D-ribose 1-phosphate + hypoxanthine. It carries out the reaction adenosine + H2O + H(+) = inosine + NH4(+). Functionally, purine nucleoside enzyme that catalyzes the phosphorolysis of adenosine and inosine nucleosides, yielding D-ribose 1-phosphate and the respective free bases, adenine and hypoxanthine. Also catalyzes the phosphorolysis of S-methyl-5'-thioadenosine into adenine and S-methyl-5-thio-alpha-D-ribose 1-phosphate. Also has adenosine deaminase activity. May also act as a polyphenol oxidase: able to oxidize syringaldazine and 2,2'-azino-bis(3-ethylbenzthiazoline-6-sulfonic acid) (ABTS) in vitro. The polypeptide is Purine nucleoside phosphorylase YfiH (Escherichia coli (strain K12)).